Reading from the N-terminus, the 72-residue chain is Translation initiation factor IF-1 (72 aa).

The S1-like domain maps to 1-72 (MAKEEMLEFP…TKGRINYRFK (72 aa)).

Belongs to the IF-1 family. As to quaternary structure, component of the 30S ribosomal translation pre-initiation complex which assembles on the 30S ribosome in the order IF-2 and IF-3, IF-1 and N-formylmethionyl-tRNA(fMet); mRNA recruitment can occur at any time during PIC assembly.

The protein localises to the cytoplasm. Functionally, one of the essential components for the initiation of protein synthesis. Stabilizes the binding of IF-2 and IF-3 on the 30S subunit to which N-formylmethionyl-tRNA(fMet) subsequently binds. Helps modulate mRNA selection, yielding the 30S pre-initiation complex (PIC). Upon addition of the 50S ribosomal subunit IF-1, IF-2 and IF-3 are released leaving the mature 70S translation initiation complex. In Jannaschia sp. (strain CCS1), this protein is Translation initiation factor IF-1.